The chain runs to 139 residues: Large ribosomal subunit protein uL16 (139 aa).

The span at 1–17 shows a compositional bias: basic residues; it reads MLMPKRVKYRKSQRGRM. The segment at 1–24 is disordered; sequence MLMPKRVKYRKSQRGRMKGNSGRG.

Belongs to the universal ribosomal protein uL16 family. Part of the 50S ribosomal subunit.

Its function is as follows. Binds 23S rRNA and is also seen to make contacts with the A and possibly P site tRNAs. The sequence is that of Large ribosomal subunit protein uL16 from Chlorobium limicola (strain DSM 245 / NBRC 103803 / 6330).